Reading from the N-terminus, the 165-residue chain is Glutamyl-tRNA(Gln) amidotransferase subunit F, mitochondrial (165 aa).

The N-terminal 19 residues, 1–19 (MKSILRSTTRNLITSSRRF), are a transit peptide targeting the mitochondrion.

Belongs to the GatF family. Subunit of the heterotrimeric GatFAB amidotransferase (AdT) complex, composed of A, B and F subunits.

The protein localises to the mitochondrion inner membrane. It carries out the reaction L-glutamyl-tRNA(Gln) + L-glutamine + ATP + H2O = L-glutaminyl-tRNA(Gln) + L-glutamate + ADP + phosphate + H(+). Its function is as follows. Allows the formation of correctly charged Gln-tRNA(Gln) through the transamidation of misacylated Glu-tRNA(Gln) in the mitochondria. The reaction takes place in the presence of glutamine and ATP through an activated gamma-phospho-Glu-tRNA(Gln). Required for proper protein synthesis within the mitochondrion. The protein is Glutamyl-tRNA(Gln) amidotransferase subunit F, mitochondrial of Candida albicans (strain WO-1) (Yeast).